Reading from the N-terminus, the 400-residue chain is MKLNGKHIVVGITGGIAAYKTIELIRLLRKAEAEVRVVLTPAAAEFVTPLTLQAISGNAVSQSLLDPQAELAMGHIELAKWADAIIIAPASADFIARLTIGMANDLLSTICLATNAPIFLAPAMNQQMYHQSITQQNLTTLQTRGIELIGPNSGFQACGDMGKGRMSEPEEIFTALSDFFSQKQDLQGLNVSITAGPTREAIDPVRYISNHSSGKMGFAIAEAFAKRGANVTLIAGPVNLTTPKNVNRINVISAQEMWQASLESAVKNQIFIGCAAVADYRVTEVAEQKIKKSGDEISIKLIKNPDIISDVGHLKTHRPFTVGFAAETQNVDDYAKDKLERKNLDMICANDVSGGQVFNADENALQLFWKNGHKKLSLKSKVELAADLVNEIIERYQKTL.

Residues 1-190 (MKLNGKHIVV…SQKQDLQGLN (190 aa)) form a phosphopantothenoylcysteine decarboxylase region. Cys158 serves as the catalytic Proton donor. Positions 191–400 (VSITAGPTRE…EIIERYQKTL (210 aa)) are phosphopantothenate--cysteine ligase. CTP is bound by residues 273 to 275 (GCA), Asp279, Lys289, 305 to 308 (PDII), Phe324, Lys338, and Lys342.

It in the N-terminal section; belongs to the HFCD (homo-oligomeric flavin containing Cys decarboxylase) superfamily. This sequence in the C-terminal section; belongs to the PPC synthetase family. Mg(2+) serves as cofactor. The cofactor is FMN.

It catalyses the reaction N-[(R)-4-phosphopantothenoyl]-L-cysteine + H(+) = (R)-4'-phosphopantetheine + CO2. The catalysed reaction is (R)-4'-phosphopantothenate + L-cysteine + CTP = N-[(R)-4-phosphopantothenoyl]-L-cysteine + CMP + diphosphate + H(+). Its pathway is cofactor biosynthesis; coenzyme A biosynthesis; CoA from (R)-pantothenate: step 2/5. It functions in the pathway cofactor biosynthesis; coenzyme A biosynthesis; CoA from (R)-pantothenate: step 3/5. In terms of biological role, catalyzes two sequential steps in the biosynthesis of coenzyme A. In the first step cysteine is conjugated to 4'-phosphopantothenate to form 4-phosphopantothenoylcysteine. In the second step the latter compound is decarboxylated to form 4'-phosphopantotheine. The sequence is that of Coenzyme A biosynthesis bifunctional protein CoaBC from Haemophilus influenzae (strain ATCC 51907 / DSM 11121 / KW20 / Rd).